We begin with the raw amino-acid sequence, 73 residues long: Putative membrane protein insertion efficiency factor (73 aa).

The protein belongs to the UPF0161 family.

The protein resides in the cell inner membrane. Its function is as follows. Could be involved in insertion of integral membrane proteins into the membrane. This Parabacteroides distasonis (strain ATCC 8503 / DSM 20701 / CIP 104284 / JCM 5825 / NCTC 11152) protein is Putative membrane protein insertion efficiency factor.